The following is a 446-amino-acid chain: GTPase Der (446 aa).

2 consecutive EngA-type G domains span residues 3–168 (PVIA…YAGQ) and 181–354 (IKIA…KAAM). GTP is bound by residues 9-16 (GRPNVGKS), 57-61 (DTGGF), 120-123 (NKAE), 187-194 (GRPNVGKS), 234-238 (DTAGL), and 299-302 (NKWD). The KH-like domain maps to 355-439 (SKLPTPKLTR…PLRIEFRSST (85 aa)).

Belongs to the TRAFAC class TrmE-Era-EngA-EngB-Septin-like GTPase superfamily. EngA (Der) GTPase family. As to quaternary structure, associates with the 50S ribosomal subunit.

GTPase that plays an essential role in the late steps of ribosome biogenesis. The protein is GTPase Der of Paraburkholderia phymatum (strain DSM 17167 / CIP 108236 / LMG 21445 / STM815) (Burkholderia phymatum).